An 82-amino-acid chain; its full sequence is Sulfur carrier protein TusA (82 aa).

Catalysis depends on Cys20, which acts as the Cysteine persulfide intermediate.

It belongs to the sulfur carrier protein TusA family.

Its subcellular location is the cytoplasm. Sulfur carrier protein which probably makes part of a sulfur-relay system. The chain is Sulfur carrier protein TusA from Aeromonas hydrophila subsp. hydrophila (strain ATCC 7966 / DSM 30187 / BCRC 13018 / CCUG 14551 / JCM 1027 / KCTC 2358 / NCIMB 9240 / NCTC 8049).